The following is a 260-amino-acid chain: Ribonuclease HII (260 aa).

One can recognise an RNase H type-2 domain in the interval 73–260 (LHIAGIDEAG…APVQQQLDIV (188 aa)). A divalent metal cation-binding residues include D79, E80, and D171.

It belongs to the RNase HII family. It depends on Mn(2+) as a cofactor. Mg(2+) is required as a cofactor.

The protein resides in the cytoplasm. It carries out the reaction Endonucleolytic cleavage to 5'-phosphomonoester.. In terms of biological role, endonuclease that specifically degrades the RNA of RNA-DNA hybrids. This is Ribonuclease HII from Desulfitobacterium hafniense (strain DSM 10664 / DCB-2).